A 251-amino-acid polypeptide reads, in one-letter code: Hydroxyacylglutathione hydrolase (251 aa).

His-53, His-55, Asp-57, His-58, His-110, Asp-127, and His-165 together coordinate Zn(2+).

It belongs to the metallo-beta-lactamase superfamily. Glyoxalase II family. As to quaternary structure, monomer. Zn(2+) serves as cofactor.

It catalyses the reaction an S-(2-hydroxyacyl)glutathione + H2O = a 2-hydroxy carboxylate + glutathione + H(+). It functions in the pathway secondary metabolite metabolism; methylglyoxal degradation; (R)-lactate from methylglyoxal: step 2/2. Thiolesterase that catalyzes the hydrolysis of S-D-lactoyl-glutathione to form glutathione and D-lactic acid. The sequence is that of Hydroxyacylglutathione hydrolase from Escherichia coli O17:K52:H18 (strain UMN026 / ExPEC).